The sequence spans 438 residues: Actin-like protein ARP6 (438 aa).

Residues 158-181 (DIVRGNSDSTNSTSSESKNAQDSG) form a disordered region. Residues 163 to 174 (NSDSTNSTSSES) are compositionally biased toward low complexity.

It belongs to the actin family. ARP6 subfamily. Component of the SWR1 chromatin remodeling complex composed of at least ACT1, ARP4, RVB1, RVB2, ARP6, YAF9, VPS71, VPS72, SWC3, SWC4, SWC5, SWC7 and SWR1, and perhaps BDF1.

The protein resides in the cytoplasm. The protein localises to the nucleus. Functionally, component of the SWR1 complex which mediates the ATP-dependent exchange of histone H2A for the H2A variant HZT1 leading to transcriptional regulation of selected genes by chromatin remodeling. Involved in chromosome stability. The chain is Actin-like protein ARP6 (ARP6) from Saccharomyces cerevisiae (strain ATCC 204508 / S288c) (Baker's yeast).